The following is a 162-amino-acid chain: Shikimate kinase (162 aa).

10–15 contacts ATP; that stretch reads GAGKST. Mg(2+) is bound at residue Ser-14. The substrate site is built by Asp-28, Arg-52, and Gly-73. Arg-113 contributes to the ATP binding site. Arg-129 serves as a coordination point for substrate.

Belongs to the shikimate kinase family. In terms of assembly, monomer. The cofactor is Mg(2+).

It is found in the cytoplasm. The catalysed reaction is shikimate + ATP = 3-phosphoshikimate + ADP + H(+). It participates in metabolic intermediate biosynthesis; chorismate biosynthesis; chorismate from D-erythrose 4-phosphate and phosphoenolpyruvate: step 5/7. Catalyzes the specific phosphorylation of the 3-hydroxyl group of shikimic acid using ATP as a cosubstrate. The polypeptide is Shikimate kinase (Lactococcus lactis subsp. lactis (strain IL1403) (Streptococcus lactis)).